Consider the following 93-residue polypeptide: Acylphosphatase (93 aa).

Cysteines 5 and 49 form a disulfide. One can recognise an Acylphosphatase-like domain in the interval C5–Y93. Residue N38 is part of the active site.

This sequence belongs to the acylphosphatase family.

It catalyses the reaction an acyl phosphate + H2O = a carboxylate + phosphate + H(+). This Salmonella paratyphi A (strain ATCC 9150 / SARB42) protein is Acylphosphatase.